The chain runs to 630 residues: Transposase B from transposon Tn554 (630 aa).

Positions 216–302 (TYFKQLVKRY…ILEGLFSTLL (87 aa)) constitute a Core-binding (CB) domain. Residues 326–513 (AKPRFIDEFV…FDETLKNEFT (188 aa)) form the Tyr recombinase domain. Active-site residues include arginine 363, lysine 391, histidine 465, arginine 468, and histidine 491. Catalysis depends on tyrosine 500, which acts as the O-(3'-phospho-DNA)-tyrosine intermediate.

This sequence belongs to the 'phage' integrase family.

Functionally, one of three proteins encoded by transposon Tn554 required for its transposition. This is Transposase B from transposon Tn554 (tnpB1) from Staphylococcus aureus (strain Mu50 / ATCC 700699).